We begin with the raw amino-acid sequence, 446 residues long: Citrate/sodium symporter (446 aa).

5 consecutive transmembrane segments (helical) span residues Ile-23–Phe-43, Ala-46–Gly-66, Ile-79–Phe-99, Val-110–Leu-130, and Ile-148–Ile-168. The Na(+) site is built by Ile-181 and Gly-183. Positions 186 and 187 each coordinate citrate. Transmembrane regions (helical) follow at residues Ile-213–Ile-233, Glu-267–Lys-287, Ile-289–Ala-309, Gln-335–Ile-355, and Val-364–Ile-384. Residues Met-399 and Asn-401 each coordinate Na(+). Citrate is bound by residues Arg-402, Gly-404, Ser-405, and Arg-428. The chain crosses the membrane as a helical span at residues Ile-425–Met-445.

The protein belongs to the 2-hydroxycarboxylate transporter (2-HCT) (TC 2.A.24) family. As to quaternary structure, homodimer.

It localises to the cell inner membrane. The enzyme catalyses citrate(out) + 2 Na(+)(out) = citrate(in) + 2 Na(+)(in). Secondary active transporter that catalyzes the uptake of citrate across the membrane with the concomitant uptake of sodium. Is specific for citrate. This is Citrate/sodium symporter from Salmonella pullorum.